Consider the following 278-residue polypeptide: Envelope glycoprotein L (278 aa).

The signal sequence occupies residues 1–30; it reads MCRRPDCGFSFSPGPVILLWCCLLLPIVSS. The 214-residue stretch at 43-256 folds into the gL betaherpesvirus-type domain; that stretch reads VPAECPELTR…DKYYAGLPPE (214 aa). Residues Cys-154 and Cys-159 are joined by a disulfide bond.

It belongs to the herpesviridae glycoprotein L (gL) family. Betaherpesvirinae gL subfamily. As to quaternary structure, interacts with glycoprotein H (gH); this interaction is necessary for the correct processing and cell surface expression of gH. Forms the envelope pentamer complex (PC) composed of gH, gL, UL128, UL130, and UL131A. The pentamer interacts with host NRP2. Forms the envelope trimer complex composed of gH, gL, and gO. The trimer interacts with host PDGFRA.

The protein localises to the virion membrane. Its subcellular location is the host cell membrane. The protein resides in the host Golgi apparatus. It localises to the host trans-Golgi network. In terms of biological role, the heterodimer glycoprotein H-glycoprotein L is required for the fusion of viral and plasma membranes leading to virus entry into the host cell. Acts as a functional inhibitor of gH and maintains gH in an inhibited form. Upon binding to host integrins, gL dissociates from gH leading to activation of the viral fusion glycoproteins gB and gH. In human cytomegalovirus, forms two distincts complexes to mediate viral entry, a trimer and a pentamer at the surface of the virion envelope. The gH-gL-gO trimer is required for infection in fibroblasts by interacting with host PDGFRA. The gH-gL-UL128-UL130-UL131A pentamer is essential for viral entry in epithelial, endothelial and myeloid cells via interaction with host NRP2. This is Envelope glycoprotein L from Human cytomegalovirus (strain PT) (HHV-5).